The primary structure comprises 237 residues: MRFDIITLFPEFFASPLSSGLMAKALARGIAEVVLTNPRHFSTDKHQRVDDEPYGGGVGMVMKPEPLFAAVESLPALPRREVIYVTPQGQPLTQQHLWHWSRERDQLVILCGHYEGVDERVVEHLVTQEISIGDFVLTCGEIPALVILNGVLRLLPGTVGKAASLHQDSFEDGLLDYPHYTRPAEFRGWTVPPVLLSGHHGEIAAWRRAQQIERTRQRRPDLYARWLARTQGQAKTH.

S-adenosyl-L-methionine contacts are provided by residues Gly112 and 132-137 (IGDFVL).

The protein belongs to the RNA methyltransferase TrmD family. As to quaternary structure, homodimer.

It is found in the cytoplasm. The catalysed reaction is guanosine(37) in tRNA + S-adenosyl-L-methionine = N(1)-methylguanosine(37) in tRNA + S-adenosyl-L-homocysteine + H(+). Functionally, specifically methylates guanosine-37 in various tRNAs. The protein is tRNA (guanine-N(1)-)-methyltransferase of Thermosynechococcus vestitus (strain NIES-2133 / IAM M-273 / BP-1).